Here is a 691-residue protein sequence, read N- to C-terminus: MSRSTPLKKVRNIGIAAHIDAGKTTTSERILFFTGMSHKIGEVHDGAATMDWMEQEKERGITITSAATTCFWKDHQINLIDTPGHVDFTIEVERSMRVLDGAVAVFCSVGGVQPQSETVWRQANKYGVPRIVFVNKMDRIGANFYNVEDQIRNRLKANPVPLQIPIGAEDNFKGVIDLVTMKALVWEDDTKPTDYVEKEIPAELKEKAEEYRTKMIEAVSETSDELMEKYLGGEELSLEEIKTGIKAGCLSLSIVPMLCGTAFKNKGVQPLLDAVVAYLPAPDEVANIKGEYEDGTEVSVKSTDDGEFAGLAFKIMTDPFVGQLTFVRVYRGCLESGSYAYNSTKDKKERIGRLLKMHSNKREEIKVLYAGEIGAVVGLKDTLTGDTLASEKDKVILERMDFPDPVISVAVEPKTKADQEKMSIALNKLAQEDPSFRVSTDEESGQTIISGMGELHLEIIVDRMLREFKVEAEVGQPQVAYRETIRKTVEQEYKYAKQSGGRGQYGHVFLRLEPLEPGSGYEFVNDIKGGVIPKEYIPAVDKGVQEALQNGVLAGYPVEDVKVTVYDGSYHEVDSSEMAFKLAASMGFKEGARKAGAVILEPMMKVEVETPEDYMGDVIGDLNKRRGQVNSMDERGGNKIITAFCPLAEMFGYSTDLRSQTQGRATYSMEFDHYDEVPKNVADEIIKKRNG.

A tr-type G domain is found at 8–283 (KKVRNIGIAA…AVVAYLPAPD (276 aa)). GTP is bound by residues 17–24 (AHIDAGKT), 81–85 (DTPGH), and 135–138 (NKMD).

It belongs to the TRAFAC class translation factor GTPase superfamily. Classic translation factor GTPase family. EF-G/EF-2 subfamily.

Its subcellular location is the cytoplasm. Functionally, catalyzes the GTP-dependent ribosomal translocation step during translation elongation. During this step, the ribosome changes from the pre-translocational (PRE) to the post-translocational (POST) state as the newly formed A-site-bound peptidyl-tRNA and P-site-bound deacylated tRNA move to the P and E sites, respectively. Catalyzes the coordinated movement of the two tRNA molecules, the mRNA and conformational changes in the ribosome. This is Elongation factor G from Campylobacter jejuni subsp. jejuni serotype O:6 (strain 81116 / NCTC 11828).